The sequence spans 148 residues: Large ribosomal subunit protein uL11 (148 aa).

Belongs to the universal ribosomal protein uL11 family. In terms of assembly, part of the ribosomal stalk of the 50S ribosomal subunit. Interacts with L10 and the large rRNA to form the base of the stalk. L10 forms an elongated spine to which L12 dimers bind in a sequential fashion forming a multimeric L10(L12)X complex. In terms of processing, one or more lysine residues are methylated.

In terms of biological role, forms part of the ribosomal stalk which helps the ribosome interact with GTP-bound translation factors. In Myxococcus xanthus (strain DK1622), this protein is Large ribosomal subunit protein uL11.